A 440-amino-acid polypeptide reads, in one-letter code: Adenylosuccinate synthetase (440 aa).

GTP contacts are provided by residues 12 to 18 and 40 to 42; these read GDEGKGK and GHT. The active-site Proton acceptor is aspartate 13. Positions 13 and 40 each coordinate Mg(2+). Residues 13-16, 38-41, threonine 128, arginine 142, glutamine 223, threonine 238, and arginine 302 contribute to the IMP site; these read DEGK and NAGH. The active-site Proton donor is histidine 41. Substrate is bound at residue 298–304; sequence TTTGRPR. Residues arginine 304, 330–332, and 412–414 each bind GTP; these read KLD and SVG.

It belongs to the adenylosuccinate synthetase family. Homodimer. Mg(2+) serves as cofactor.

It is found in the cytoplasm. The enzyme catalyses IMP + L-aspartate + GTP = N(6)-(1,2-dicarboxyethyl)-AMP + GDP + phosphate + 2 H(+). Its pathway is purine metabolism; AMP biosynthesis via de novo pathway; AMP from IMP: step 1/2. In terms of biological role, plays an important role in the de novo pathway of purine nucleotide biosynthesis. Catalyzes the first committed step in the biosynthesis of AMP from IMP. The sequence is that of Adenylosuccinate synthetase from Gloeobacter violaceus (strain ATCC 29082 / PCC 7421).